Here is a 1846-residue protein sequence, read N- to C-terminus: Brefeldin A-inhibited guanine nucleotide-exchange protein 1 (1846 aa).

The interval 2-224 is DCB; DCB:DCB domain and DCB:HUS domain interaction; sequence YEGKKTKNMF…QEAKQMERER (223 aa). Serine 52 is subject to Phosphoserine. Disordered stretches follow at residues 216–249, 264–304, and 347–410; these read EAKQ…LRYL, DLEP…ATAA, and ISAS…SPGA. Residues 264–277 show a composition bias toward basic and acidic residues; sequence DLEPQTHDVDKSLQ. Residues serine 286, serine 289, and serine 290 each carry the phosphoserine modification. Composition is skewed to polar residues over residues 348 to 357 and 391 to 406; these read SASTEGNTGT and SVSS…SSGP. A phosphoserine mark is found at serine 394 and serine 407. Residues 554-574 are HUS; DCB:HUS domain interaction; that stretch reads ADAQSVVDIYVNYDCDLNAAN. A disordered region spans residues 631–684; sequence PNSQTTLGQEKPSEQEISEVKHPETINRYGSLNSLESTSSSGIGSYSTQMSGTD. The segment covering 641 to 655 has biased composition (basic and acidic residues); sequence KPSEQEISEVKHPET. Over residues 661–681 the composition is skewed to low complexity; that stretch reads SLNSLESTSSSGIGSYSTQMS. The SEC7 domain occupies 688 to 877; sequence QFEVLKQQKE…SAIYNEIAGK (190 aa). Positions 708 to 712 match the Nuclear localization signal (NLS) motif; it reads KKPKR. Residues serine 1076, serine 1563, and serine 1566 each carry the phosphoserine modification.

As to quaternary structure, homodimer. Interacts with ARFGEF2/BIG2; both proteins are probably part of the same or very similar macromolecular complexes. Interacts with FKBP2. Interacts with MYO9B. Interacts with PRKAR1A and PRKAR2A. Interacts with PPP1CC. Interacts with NCL, FBL, NUP62 and U3 small nucleolar RNA. Interacts with DPY30. Interacts with PDE3A. Interacts with KANK1. Interacts with TBC1D22A and TBC1D22B. In terms of processing, phosphorylated. In vitro phosphorylated by PKA reducing its GEF activity and dephosphorylated by phosphatase PP1.

The protein resides in the cytoplasm. It localises to the perinuclear region. It is found in the golgi apparatus. Its subcellular location is the trans-Golgi network. The protein localises to the nucleus. The protein resides in the nucleolus. It localises to the nucleus matrix. It is found in the membrane. Inhibited by brefeldin A. Functionally, promotes guanine-nucleotide exchange on ARF1 and ARF3. Promotes the activation of ARF1/ARF3 through replacement of GDP with GTP. Involved in vesicular trafficking. Required for the maintenance of Golgi structure; the function may be independent of its GEF activity. Required for the maturation of integrin beta-1 in the Golgi. Involved in the establishment and persistence of cell polarity during directed cell movement in wound healing. Proposed to act as A kinase-anchoring protein (AKAP) and may mediate crosstalk between Arf and PKA pathways. Inhibits GAP activity of MYO9B probably through competitive RhoA binding. The function in the nucleus remains to be determined. In Mus musculus (Mouse), this protein is Brefeldin A-inhibited guanine nucleotide-exchange protein 1 (Arfgef1).